The following is a 696-amino-acid chain: UvrABC system protein B (696 aa).

Positions 46 to 433 constitute a Helicase ATP-binding domain; that stretch reads EGVEDGLSFQ…SGQTAEQVVR (388 aa). 59–66 provides a ligand contact to ATP; the sequence is GVTGSGKT. A Beta-hairpin motif is present at residues 112–135; sequence YYDYYQPEAYVPQRDLFIEKDSSI. The Helicase C-terminal domain occupies 450 to 616; that stretch reads QVDDVLSEIT…GVVKRIKDII (167 aa). The 36-residue stretch at 647 to 682 folds into the UVR domain; the sequence is AKEIKRLEKQMADYAKNLEFEKAAQTRDQLALLRER.

This sequence belongs to the UvrB family. Forms a heterotetramer with UvrA during the search for lesions. Interacts with UvrC in an incision complex.

It is found in the cytoplasm. Functionally, the UvrABC repair system catalyzes the recognition and processing of DNA lesions. A damage recognition complex composed of 2 UvrA and 2 UvrB subunits scans DNA for abnormalities. Upon binding of the UvrA(2)B(2) complex to a putative damaged site, the DNA wraps around one UvrB monomer. DNA wrap is dependent on ATP binding by UvrB and probably causes local melting of the DNA helix, facilitating insertion of UvrB beta-hairpin between the DNA strands. Then UvrB probes one DNA strand for the presence of a lesion. If a lesion is found the UvrA subunits dissociate and the UvrB-DNA preincision complex is formed. This complex is subsequently bound by UvrC and the second UvrB is released. If no lesion is found, the DNA wraps around the other UvrB subunit that will check the other stand for damage. The sequence is that of UvrABC system protein B from Burkholderia mallei (strain ATCC 23344).